Reading from the N-terminus, the 67-residue chain is MPKMKTKSSAKKRFRVRPGGTVKRGQAFKRHILTKMTTRNKRHLRGTVAVHETNMGSMAQMLPGAGL.

A compositionally biased stretch (basic residues) spans 1–16 (MPKMKTKSSAKKRFRV). The interval 1-24 (MPKMKTKSSAKKRFRVRPGGTVKR) is disordered.

It belongs to the bacterial ribosomal protein bL35 family.

The chain is Large ribosomal subunit protein bL35 from Verminephrobacter eiseniae (strain EF01-2).